The sequence spans 497 residues: Malonate-semialdehyde dehydrogenase (497 aa).

NAD(+)-binding residues include Phe-148, Lys-172, Glu-175, Arg-176, and Ser-225. Cys-280 acts as the Nucleophile in catalysis. Residue Glu-382 coordinates NAD(+).

Belongs to the aldehyde dehydrogenase family.

It carries out the reaction 3-oxopropanoate + NAD(+) + CoA + H2O = hydrogencarbonate + acetyl-CoA + NADH + H(+). In terms of biological role, involved in the degradation of beta-alanine. Likely catalyzes the NAD(+)- and CoA-dependent oxidative decarboxylation of malonate semialdehyde (3-oxopropanoate) to acetyl-CoA. The polypeptide is Malonate-semialdehyde dehydrogenase (Pseudomonas aeruginosa (strain ATCC 15692 / DSM 22644 / CIP 104116 / JCM 14847 / LMG 12228 / 1C / PRS 101 / PAO1)).